The sequence spans 303 residues: Elongation factor Ts (303 aa).

The involved in Mg(2+) ion dislocation from EF-Tu stretch occupies residues 80 to 83 (TDFV).

Belongs to the EF-Ts family.

The protein resides in the cytoplasm. In terms of biological role, associates with the EF-Tu.GDP complex and induces the exchange of GDP to GTP. It remains bound to the aminoacyl-tRNA.EF-Tu.GTP complex up to the GTP hydrolysis stage on the ribosome. The polypeptide is Elongation factor Ts (Clostridium botulinum (strain Alaska E43 / Type E3)).